The chain runs to 460 residues: Probable Xaa-Pro aminopeptidase VDBG_02538 (460 aa).

Mn(2+)-binding residues include D256, D267, E390, and E430.

Belongs to the peptidase M24B family. The cofactor is Mn(2+).

It carries out the reaction Release of any N-terminal amino acid, including proline, that is linked to proline, even from a dipeptide or tripeptide.. Its function is as follows. Catalyzes the removal of a penultimate prolyl residue from the N-termini of peptides. The protein is Probable Xaa-Pro aminopeptidase VDBG_02538 of Verticillium alfalfae (strain VaMs.102 / ATCC MYA-4576 / FGSC 10136) (Verticillium wilt of alfalfa).